Reading from the N-terminus, the 408-residue chain is Chaperone protein dnaJ 1, mitochondrial (408 aa).

Residues methionine 1–glycine 26 constitute a mitochondrion transit peptide. Residues asparagine 48–glutamine 113 form the J domain. The segment at glycine 173 to threonine 247 adopts a CR-type zinc-finger fold. Zn(2+) contacts are provided by cysteine 186, cysteine 189, cysteine 203, cysteine 206, cysteine 221, cysteine 224, cysteine 235, and cysteine 238. CXXCXGXG motif repeat units lie at residues cysteine 186–glycine 193, cysteine 203–glycine 210, cysteine 221–glycine 228, and cysteine 235–glycine 242.

It belongs to the DnaJ family. B/II subfamily. In terms of assembly, homodimer. Requires Zn(2+) as cofactor. As to expression, ubiquitous.

The protein resides in the mitochondrion. Functionally, plays a continuous role in plant development probably in the structural organization of compartments. In Arabidopsis thaliana (Mouse-ear cress), this protein is Chaperone protein dnaJ 1, mitochondrial (ATJ1).